Reading from the N-terminus, the 335-residue chain is 3-ketodihydrosphingosine reductase TSC10 (335 aa).

NADPH is bound by residues Gly-42, Ser-44, Ser-45, and Gly-46. The GXSXG signature appears at 42-46 (GGSSG). Residue Leu-47 coordinates NADP(+). Arg-67, Asp-68, Lys-71, Asp-95, and Leu-96 together coordinate NADPH. Asp-95 lines the NADP(+) pocket. Positions 190, 194, and 223 each coordinate NADP(+). Catalysis depends on Tyr-190, which acts as the Proton acceptor. The active-site Lowers pKa of active site Tyr is Lys-194. A helical transmembrane segment spans residues 288–308 (TNNFLLDTLWLIVSSVGVPIW).

Belongs to the short-chain dehydrogenases/reductases (SDR) family.

Its subcellular location is the endoplasmic reticulum membrane. The catalysed reaction is sphinganine + NADP(+) = 3-oxosphinganine + NADPH + H(+). It functions in the pathway lipid metabolism; sphingolipid metabolism. In terms of biological role, catalyzes the reduction of 3'-oxosphinganine (3-ketodihydrosphingosine/KDS) to sphinganine (dihydrosphingosine/DHS), the second step of de novo sphingolipid biosynthesis. In Cryptococcus neoformans var. neoformans serotype D (strain B-3501A) (Filobasidiella neoformans), this protein is 3-ketodihydrosphingosine reductase TSC10 (TSC10).